The chain runs to 495 residues: ATP synthase subunit beta, chloroplastic (495 aa).

172–179 is a binding site for ATP; that stretch reads GGAGVGKT.

This sequence belongs to the ATPase alpha/beta chains family. In terms of assembly, F-type ATPases have 2 components, CF(1) - the catalytic core - and CF(0) - the membrane proton channel. CF(1) has five subunits: alpha(3), beta(3), gamma(1), delta(1), epsilon(1). CF(0) has four main subunits: a(1), b(1), b'(1) and c(9-12).

It is found in the plastid. It localises to the chloroplast thylakoid membrane. The catalysed reaction is ATP + H2O + 4 H(+)(in) = ADP + phosphate + 5 H(+)(out). Functionally, produces ATP from ADP in the presence of a proton gradient across the membrane. The catalytic sites are hosted primarily by the beta subunits. This Pseudogaltonia clavata (Cape hyacinth) protein is ATP synthase subunit beta, chloroplastic.